We begin with the raw amino-acid sequence, 307 residues long: ATP-dependent (S)-NAD(P)H-hydrate dehydratase (307 aa).

A YjeF C-terminal domain is found at 1–291; sequence MDHFLKLLPK…DEIPKLVRDV (291 aa). (6S)-NADPHX-binding positions include G96 and 150-156; that span reads NIVEFSR. ATP contacts are provided by residues 194–198 and 214–223; these read KGEVD and SSLRRCGGQG. D224 lines the (6S)-NADPHX pocket.

It belongs to the NnrD/CARKD family. It depends on Mg(2+) as a cofactor.

The catalysed reaction is (6S)-NADHX + ATP = ADP + phosphate + NADH + H(+). It carries out the reaction (6S)-NADPHX + ATP = ADP + phosphate + NADPH + H(+). Catalyzes the dehydration of the S-form of NAD(P)HX at the expense of ATP, which is converted to ADP. Together with NAD(P)HX epimerase, which catalyzes the epimerization of the S- and R-forms, the enzyme allows the repair of both epimers of NAD(P)HX, a damaged form of NAD(P)H that is a result of enzymatic or heat-dependent hydration. In Caenorhabditis briggsae, this protein is ATP-dependent (S)-NAD(P)H-hydrate dehydratase.